The sequence spans 758 residues: Probable C-mannosyltransferase DPY19L2 (758 aa).

The segment at 1 to 58 is disordered; sequence MRKQGVSSKRLQSSGRSQSKGRRGASLAREPEVEEEMEKSALGGGKLPRGSWRSSPGR. The Nuclear portion of the chain corresponds to 1–107; sequence MRKQGVSSKR…ELQARRFSSR (107 aa). The span at 7–18 shows a compositional bias: low complexity; sequence SSKRLQSSGRSQ. The chain crosses the membrane as a helical span at residues 108–128; sequence TTLGIAVFVAILHWLHLVTLF. The Perinuclear space portion of the chain corresponds to 129-194; the sequence is ENDRHFSHLS…INAIKRFHLY (66 aa). The helical transmembrane segment at 195-215 threads the bilayer; that stretch reads PEVIIASWYCTFMGIMNLFGL. Topologically, residues 216 to 241 are nuclear; that stretch reads ETKTCWNVTRIEPLNEVQSCEGLGDP. The next 2 membrane-spanning stretches (helical) occupy residues 242–262 and 263–283; these read ACFYVGVIFILNGLMMGLFFM and YGAYLSGTQLGGLITVLCFFF. The Nuclear segment spans residues 284-296; sequence NHGEATRVMWTPP. The helical transmembrane segment at 297–317 threads the bilayer; the sequence is LRESFSYPFLVLQMCILTLIL. The Perinuclear space portion of the chain corresponds to 318-343; it reads RTSSNDRRPFIALCLSNVAFMLPWQF. A helical transmembrane segment spans residues 344–364; the sequence is AQFILFTQIASLFPMYVVGYI. The Nuclear segment spans residues 365–371; sequence EPSKFQK. The chain crosses the membrane as a helical span at residues 372–392; sequence IIYMNMISVTLSFILMFGNSM. The Perinuclear space portion of the chain corresponds to 393–422; the sequence is YLSSYYSSSLLMTWAIILKRNEIQKLGVSK. The helical transmembrane segment at 423 to 443 threads the bilayer; that stretch reads LNFWLIQGSAWWCGTIILKFL. The Nuclear segment spans residues 444-488; it reads TSKILGVSDHIRLSDLIAARILRYTDFDTLIYTCAPEFDFMEKAT. A helical transmembrane segment spans residues 489–509; that stretch reads PLRYTKTLLLPVVMVITCFIF. Over 510-533 the chain is Perinuclear space; it reads KKTVRDISYVLATNIYLRKQLLEH. The chain crosses the membrane as a helical span at residues 534–554; sequence SELAFHTLQLLVFTALAILIM. Over 555 to 758 the chain is Nuclear; the sequence is RLKMFLTPHM…NSVYRVLKVN (204 aa).

Belongs to the dpy-19 family. As to quaternary structure, interacts with FAM209. In terms of tissue distribution, widely expressed with high expression in testis. Not detectable in ejaculated sperm (at protein level).

It is found in the nucleus inner membrane. Probable C-mannosyltransferase that mediates C-mannosylation of tryptophan residues on target proteins. In terms of biological role, required during spermatogenesis for sperm head elongation and acrosome formation. Also plays a role in acrosome attachment to the nuclear envelope. The protein is Probable C-mannosyltransferase DPY19L2 of Homo sapiens (Human).